A 559-amino-acid polypeptide reads, in one-letter code: Dihydroxy-acid dehydratase (559 aa).

A Mg(2+)-binding site is contributed by D80. C121 lines the [2Fe-2S] cluster pocket. Positions 122 and 123 each coordinate Mg(2+). N6-carboxylysine is present on K123. C194 is a [2Fe-2S] cluster binding site. E447 contacts Mg(2+). The Proton acceptor role is filled by S473.

It belongs to the IlvD/Edd family. Homodimer. [2Fe-2S] cluster is required as a cofactor. Requires Mg(2+) as cofactor.

It carries out the reaction (2R)-2,3-dihydroxy-3-methylbutanoate = 3-methyl-2-oxobutanoate + H2O. The catalysed reaction is (2R,3R)-2,3-dihydroxy-3-methylpentanoate = (S)-3-methyl-2-oxopentanoate + H2O. The protein operates within amino-acid biosynthesis; L-isoleucine biosynthesis; L-isoleucine from 2-oxobutanoate: step 3/4. It functions in the pathway amino-acid biosynthesis; L-valine biosynthesis; L-valine from pyruvate: step 3/4. Functionally, functions in the biosynthesis of branched-chain amino acids. Catalyzes the dehydration of (2R,3R)-2,3-dihydroxy-3-methylpentanoate (2,3-dihydroxy-3-methylvalerate) into 2-oxo-3-methylpentanoate (2-oxo-3-methylvalerate) and of (2R)-2,3-dihydroxy-3-methylbutanoate (2,3-dihydroxyisovalerate) into 2-oxo-3-methylbutanoate (2-oxoisovalerate), the penultimate precursor to L-isoleucine and L-valine, respectively. This Chlorobium chlorochromatii (strain CaD3) protein is Dihydroxy-acid dehydratase.